A 1298-amino-acid chain; its full sequence is Histone-lysine N-methyltransferase EHMT1 (1298 aa).

2 disordered regions span residues 1–111 (MAAA…HVTA) and 144–192 (ASSL…RKLP). Ala-2 bears the N-acetylalanine mark. Lys-22 participates in a covalent cross-link: Glycyl lysine isopeptide (Lys-Gly) (interchain with G-Cter in SUMO1); alternate. A Glycyl lysine isopeptide (Lys-Gly) (interchain with G-Cter in SUMO2); alternate cross-link involves residue Lys-22. Basic and acidic residues predominate over residues 38–50 (SAEKQAGEAHMAA). 2 stretches are compositionally biased toward polar residues: residues 54–67 (TNGSCENSDASSHA) and 76–89 (SARVNPQDGTNTLT). The segment covering 96–105 (VSERDSEAAK) has biased composition (basic and acidic residues). Glycyl lysine isopeptide (Lys-Gly) (interchain with G-Cter in SUMO2) cross-links involve residues Lys-190, Lys-199, Lys-231, Lys-234, Lys-317, and Lys-327. The segment at 211–234 (VVGLHAASKDPREVREARDHKEPK) is disordered. Basic and acidic residues predominate over residues 217–234 (ASKDPREVREARDHKEPK). The interval 339-479 (VNGESLEMDS…QTAPGDSTGY (141 aa)) is disordered. Residues 344–360 (LEMDSDEDDSEELEEDD) show a composition bias toward acidic residues. Over residues 373–393 (EDSRTSKESMSEADRAQKMDG) the composition is skewed to basic and acidic residues. The span at 394-416 (ESEEEQESVDTGEEEEGGDESDL) shows a compositional bias: acidic residues. A Glycyl lysine isopeptide (Lys-Gly) (interchain with G-Cter in SUMO2) cross-link involves residue Lys-432. Ser-435 bears the Phosphoserine mark. Residues 440-452 (PARKRRRRSRKKP) show a composition bias toward basic residues. Residues 460–474 (SYKSSAGSAEQTAPG) show a composition bias toward polar residues. Ser-483 carries the phosphoserine modification. Glycyl lysine isopeptide (Lys-Gly) (interchain with G-Cter in SUMO2) cross-links involve residues Lys-492, Lys-559, Lys-644, Lys-659, Lys-684, and Lys-731. The tract at residues 644 to 717 (KADTTSTVTP…TPGLSQGPGK (74 aa)) is disordered. ANK repeat units follow at residues 737–766 (FHPKQLYFSARQGELQKVLLMLVDGIDPNF), 772–801 (NKRSPLHAAAEAGHVDICHMLVQAGANIDT), 805–834 (DQRTPLMEAAENNHLEAVKYLIKAGALVDP), 838–868 (EGSTCLHLAAKKGHYEVVQYLLSNGQMDVNC), 872–901 (GGWTPMIWATEYKHVDLVKLLLSKGSDINI), 905–934 (EENICLHWAAFSGCVDIAEILLAAKCDLHA), 938–967 (HGDSPLHIAARENRYDCVVLFLSRDSDVTL), and 971–1004 (EGETPLQCASLNSQVWSALQMSKALQDSAPDRPS). The interval 905–907 (EEN) is histone H3K9me binding. Residues Ser-1004 and Ser-1048 each carry the phosphoserine modification. Residues 1060–1123 (QYCVCIDDCS…NCRNRVVQNG (64 aa)) form the Pre-SET domain. Cys-1062, Cys-1064, Cys-1068, Cys-1073, Cys-1075, Cys-1105, Cys-1109, Cys-1111, and Cys-1115 together coordinate Zn(2+). The SET domain occupies 1126–1243 (ARLQLYRTRD…AGEQLGFDYG (118 aa)). S-adenosyl-L-methionine contacts are provided by residues 1136-1138 (MGW), Tyr-1173, and 1200-1201 (NH). The tract at residues 1162 to 1181 (DSEADVREEDSYLFDLDNKD) is interaction with histone H3. Position 1203 (Cys-1203) interacts with Zn(2+). Residues 1242–1245 (YGER) form an interaction with histone H3 region. Cys-1256 contacts Zn(2+). Arg-1257 is a binding site for S-adenosyl-L-methionine. Residues Cys-1258 and Cys-1263 each coordinate Zn(2+). Positions 1274-1298 (QASAAQEAQEDGLPDTSSAAAADPL) are disordered.

It belongs to the class V-like SAM-binding methyltransferase superfamily. In terms of assembly, heterodimer; heterodimerizes with EHMT2. Interacts with WIZ and EHMT2. Part of the E2F6.com-1 complex in G0 phase composed of E2F6, MGA, MAX, TFDP1, CBX3, BAT8, EHMT1, RING1, RNF2, MBLR, L3MBTL2 and YAF2. Interacts (via ANK repeats) with RELA (when monomethylated at 'Lys-310'). Interacts with MPHOSPH8. Interacts with CDYL. Interacts with REST only in the presence of CDYL. Part of a complex containing at least CDYL, REST, WIZ, SETB1, EHMT1 and EHMT2. Interacts with BAZ2B. Widely expressed.

Its subcellular location is the nucleus. The protein resides in the chromosome. It carries out the reaction N(6)-methyl-L-lysyl(9)-[histone H3] + S-adenosyl-L-methionine = N(6),N(6)-dimethyl-L-lysyl(9)-[histone H3] + S-adenosyl-L-homocysteine + H(+). It catalyses the reaction L-lysyl(9)-[histone H3] + S-adenosyl-L-methionine = N(6)-methyl-L-lysyl(9)-[histone H3] + S-adenosyl-L-homocysteine + H(+). With respect to regulation, methyltransferase activity is inhibited by BIX-01294. Efficiently inhibited by compound E72, a BIX-01294 derivative in which the diazepane ring and the benzyl are replaced with a 3-dimethylaminopropyl and a 5-aminopentyl group at sites B and C, respectively. In terms of biological role, histone methyltransferase that specifically mono- and dimethylates 'Lys-9' of histone H3 (H3K9me1 and H3K9me2, respectively) in euchromatin. H3K9me represents a specific tag for epigenetic transcriptional repression by recruiting HP1 proteins to methylated histones. Also weakly methylates 'Lys-27' of histone H3 (H3K27me). Also required for DNA methylation, the histone methyltransferase activity is not required for DNA methylation, suggesting that these 2 activities function independently. Probably targeted to histone H3 by different DNA-binding proteins like E2F6, MGA, MAX and/or DP1. During G0 phase, it probably contributes to silencing of MYC- and E2F-responsive genes, suggesting a role in G0/G1 transition in cell cycle. In addition to the histone methyltransferase activity, also methylates non-histone proteins: mediates dimethylation of 'Lys-373' of p53/TP53. Represses the expression of mitochondrial function-related genes, perhaps by occupying their promoter regions, working in concert with probable chromatin reader BAZ2B. In Homo sapiens (Human), this protein is Histone-lysine N-methyltransferase EHMT1 (EHMT1).